The sequence spans 85 residues: UPF0181 protein YE1782 (85 aa).

2 disordered regions span residues 1–22 and 57–85; these read MLAG…RIHQ and DTDF…PYEG. A compositionally biased stretch (basic and acidic residues) spans 9–21; sequence SHEEQQEAVERIH. Over residues 74–85 the composition is skewed to acidic residues; sequence QDADEIEDPYEG.

It belongs to the UPF0181 family.

In Yersinia enterocolitica serotype O:8 / biotype 1B (strain NCTC 13174 / 8081), this protein is UPF0181 protein YE1782.